A 529-amino-acid polypeptide reads, in one-letter code: Peptide chain release factor 3 (529 aa).

Positions 11–280 (AKRRTFAIIS…GLVEWAPAPM (270 aa)) constitute a tr-type G domain. Residues 20–27 (SHPDAGKT), 88–92 (DTPGH), and 142–145 (NKLD) contribute to the GTP site.

This sequence belongs to the TRAFAC class translation factor GTPase superfamily. Classic translation factor GTPase family. PrfC subfamily.

It localises to the cytoplasm. Its function is as follows. Increases the formation of ribosomal termination complexes and stimulates activities of RF-1 and RF-2. It binds guanine nucleotides and has strong preference for UGA stop codons. It may interact directly with the ribosome. The stimulation of RF-1 and RF-2 is significantly reduced by GTP and GDP, but not by GMP. In Shigella dysenteriae serotype 1 (strain Sd197), this protein is Peptide chain release factor 3.